The following is a 195-amino-acid chain: Recombination protein RecR (195 aa).

The C4-type zinc finger occupies 53 to 68 (CPVCFNIDVKSPCSIC). The Toprim domain occupies 76-171 (QLLCIVEELG…KVTRLACGIP (96 aa)).

This sequence belongs to the RecR family.

May play a role in DNA repair. It seems to be involved in an RecBC-independent recombinational process of DNA repair. It may act with RecF and RecO. The polypeptide is Recombination protein RecR (Ehrlichia chaffeensis (strain ATCC CRL-10679 / Arkansas)).